Reading from the N-terminus, the 178-residue chain is Caveolin-1 (178 aa).

Position 2 is an N-acetylserine (serine 2). The residue at position 2 (serine 2) is a Phosphoserine. The segment at 2-94 (SGGKYVDSEG…WKASFTTFTV (93 aa)) is required for homooligomerization. Topologically, residues 2–104 (SGGKYVDSEG…TKYWFYRLLS (103 aa)) are cytoplasmic. N6-acetyllysine; alternate is present on lysine 5. Lysine 5 participates in a covalent cross-link: Glycyl lysine isopeptide (Lys-Gly) (interchain with G-Cter in ubiquitin); alternate. Tyrosine 6 is subject to Phosphotyrosine. Serine 9 carries the post-translational modification Phosphoserine. The residue at position 14 (tyrosine 14) is a Phosphotyrosine; by ABL1. Residue tyrosine 25 is modified to Phosphotyrosine. Residues lysine 26, lysine 30, lysine 39, lysine 47, and lysine 57 each participate in a glycyl lysine isopeptide (Lys-Gly) (interchain with G-Cter in ubiquitin) cross-link. The segment at 82 to 94 (DGIWKASFTTFTV) is interaction with CAVIN3. An intramembrane region (helical) is located at residues 105 to 125 (ALFGIPMALIWGIYFAILSFL). The Cytoplasmic segment spans residues 126-178 (HIWAVVPCIKSFLIEIQCISRVYSIYVHTFCDPLFEAIGKIFSNIRINMQKEI). Positions 131–142 (VPCIKSFLIEIQ) are interacts with SPRY1, SPRY2, SPRY3 and SPRY4. Residues cysteine 133, cysteine 143, and cysteine 156 are each lipidated (S-palmitoyl cysteine). The tract at residues 149–160 (SIYVHTFCDPLF) is interacts with SPRY1, SPRY2, and SPRY4. The tract at residues 167–178 (FSNIRINMQKEI) is interacts with SPRY1, SPRY2, SPRY3 and SPRY4.

This sequence belongs to the caveolin family. Homooligomer. Interacts with GLIPR2. Interacts with NOSTRIN. Interacts with SNAP25 and STX1A. Interacts (via the N-terminus) with DPP4; the interaction is direct. Interacts with CTNNB1, CDH1 and JUP. Interacts with PACSIN2; this interaction induces membrane tubulation. Interacts with SLC7A9. Interacts with BMX and BTK. Interacts with TGFBR1. Interacts with CAVIN3 (via leucine-zipper domain) in a cholesterol-sensitive manner. Interacts with CAVIN1. Interacts with EHD2 in a cholesterol-dependent manner. Forms a ternary complex with UBXN6 and VCP; mediates CAV1 targeting to lysosomes for degradation. Interacts with ABCG1; this interaction regulates ABCG1-mediated cholesterol efflux. Interacts with NEU3; this interaction enhances NEU3 sialidase activity within caveola. Interacts (via C-terminus) with SPRY1, SPRY2 (via C-terminus), SPRY3, and SPRY4. Interacts with IGFBP5; this interaction allows trafficking of IGFBP5 from the plasma membrane to the nucleus. In terms of processing, phosphorylated at Tyr-14 by ABL1 in response to oxidative stress. Ubiquitinated. Undergo monoubiquitination and multi- and/or polyubiquitination. Monoubiquitination of N-terminal lysines promotes integration in a ternary complex with UBXN6 and VCP which promotes oligomeric CAV1 targeting to lysosomes for degradation. Ubiquitinated by ZNRF1; leading to degradation and modulation of the TLR4-mediated immune response.

It localises to the golgi apparatus membrane. It is found in the cell membrane. The protein resides in the membrane. The protein localises to the caveola. Its subcellular location is the membrane raft. Its function is as follows. May act as a scaffolding protein within caveolar membranes. Forms a stable heterooligomeric complex with CAV2 that targets to lipid rafts and drives caveolae formation. Mediates the recruitment of CAVIN proteins (CAVIN1/2/3/4) to the caveolae. Interacts directly with G-protein alpha subunits and can functionally regulate their activity. Involved in the costimulatory signal essential for T-cell receptor (TCR)-mediated T-cell activation. Its binding to DPP4 induces T-cell proliferation and NF-kappa-B activation in a T-cell receptor/CD3-dependent manner. Recruits CTNNB1 to caveolar membranes and may regulate CTNNB1-mediated signaling through the Wnt pathway. Negatively regulates TGFB1-mediated activation of SMAD2/3 by mediating the internalization of TGFBR1 from membrane rafts leading to its subsequent degradation. Binds 20(S)-hydroxycholesterol (20(S)-OHC). In Muntiacus reevesi (Reeves' muntjac), this protein is Caveolin-1 (CAV1).